Consider the following 133-residue polypeptide: ATP synthase epsilon chain, chloroplastic (133 aa).

Belongs to the ATPase epsilon chain family. F-type ATPases have 2 components, CF(1) - the catalytic core - and CF(0) - the membrane proton channel. CF(1) has five subunits: alpha(3), beta(3), gamma(1), delta(1), epsilon(1). CF(0) has three main subunits: a, b and c.

The protein resides in the plastid. It localises to the chloroplast thylakoid membrane. In terms of biological role, produces ATP from ADP in the presence of a proton gradient across the membrane. This chain is ATP synthase epsilon chain, chloroplastic, found in Vitis vinifera (Grape).